Consider the following 193-residue polypeptide: Probable nicotinate-nucleotide adenylyltransferase (193 aa).

It belongs to the NadD family.

It catalyses the reaction nicotinate beta-D-ribonucleotide + ATP + H(+) = deamido-NAD(+) + diphosphate. It participates in cofactor biosynthesis; NAD(+) biosynthesis; deamido-NAD(+) from nicotinate D-ribonucleotide: step 1/1. Its function is as follows. Catalyzes the reversible adenylation of nicotinate mononucleotide (NaMN) to nicotinic acid adenine dinucleotide (NaAD). This Coprothermobacter proteolyticus (strain ATCC 35245 / DSM 5265 / OCM 4 / BT) protein is Probable nicotinate-nucleotide adenylyltransferase.